Consider the following 395-residue polypeptide: MFRTLDDANVQSKRVLVRIDLNVPMANGEVTDLTRIERIVPTIAELSRKGAKVILLAHFGRPKGVASDENSLKHVVKPLSKVLDHSVHFAEDCIGDKAKAAVDALKDGDVLLLENTRFHKGEEKNDPEFVQALAANGDLYVNDAFSAAHRAHASTEGLAHVLPAFAGRAMQAELEALEKGLGNPARPVVAIVGGAKVSTKLDLLSNLIEKVDALVIGGGMANTFLAAKGLDVGKSLCEHELASTAREIMAKAETTKCAIILPVDAVVGWHFAADTPHQTYGVDSVPGDAMILDAGELSTDLIASAIDDAATLVWNGPLGAFELRPFDTATVKVARHVAKRTKEGKLVSVGGGGDTVAALNHAGVVDDFTYISTAGGAFLEWMEGKPLPSVDVLKK.

Residues 20–22 (DLN), Arg-35, 58–61 (HFGR), Arg-117, and Arg-150 each bind substrate. Residues Lys-200, Glu-322, and 352–355 (GGDT) contribute to the ATP site.

It belongs to the phosphoglycerate kinase family. As to quaternary structure, monomer.

The protein resides in the cytoplasm. It catalyses the reaction (2R)-3-phosphoglycerate + ATP = (2R)-3-phospho-glyceroyl phosphate + ADP. Its pathway is carbohydrate degradation; glycolysis; pyruvate from D-glyceraldehyde 3-phosphate: step 2/5. This Brucella suis biovar 1 (strain 1330) protein is Phosphoglycerate kinase.